The primary structure comprises 745 residues: Phosphoribosylformylglycinamidine synthase subunit PurL (745 aa).

The active site involves His-47. ATP-binding residues include Tyr-50 and Lys-90. Glu-92 is a binding site for Mg(2+). Substrate is bound by residues 93-96 (SHNH) and Arg-115. The active-site Proton acceptor is His-94. Position 116 (Asp-116) interacts with Mg(2+). Gln-240 contacts substrate. Asp-268 lines the Mg(2+) pocket. Residue 312 to 314 (ESQ) coordinates substrate. ATP contacts are provided by Asn-501 and Gly-538. A Mg(2+)-binding site is contributed by Asn-539. Ser-541 serves as a coordination point for substrate.

Belongs to the FGAMS family. In terms of assembly, monomer. Part of the FGAM synthase complex composed of 1 PurL, 1 PurQ and 2 PurS subunits.

Its subcellular location is the cytoplasm. It carries out the reaction N(2)-formyl-N(1)-(5-phospho-beta-D-ribosyl)glycinamide + L-glutamine + ATP + H2O = 2-formamido-N(1)-(5-O-phospho-beta-D-ribosyl)acetamidine + L-glutamate + ADP + phosphate + H(+). The protein operates within purine metabolism; IMP biosynthesis via de novo pathway; 5-amino-1-(5-phospho-D-ribosyl)imidazole from N(2)-formyl-N(1)-(5-phospho-D-ribosyl)glycinamide: step 1/2. Its function is as follows. Part of the phosphoribosylformylglycinamidine synthase complex involved in the purines biosynthetic pathway. Catalyzes the ATP-dependent conversion of formylglycinamide ribonucleotide (FGAR) and glutamine to yield formylglycinamidine ribonucleotide (FGAM) and glutamate. The FGAM synthase complex is composed of three subunits. PurQ produces an ammonia molecule by converting glutamine to glutamate. PurL transfers the ammonia molecule to FGAR to form FGAM in an ATP-dependent manner. PurS interacts with PurQ and PurL and is thought to assist in the transfer of the ammonia molecule from PurQ to PurL. The sequence is that of Phosphoribosylformylglycinamidine synthase subunit PurL from Leptospira interrogans serogroup Icterohaemorrhagiae serovar copenhageni (strain Fiocruz L1-130).